The following is a 241-amino-acid chain: Sugar fermentation stimulation protein homolog (241 aa).

It belongs to the SfsA family.

This is Sugar fermentation stimulation protein homolog from Jannaschia sp. (strain CCS1).